Consider the following 692-residue polypeptide: MGERGELVSDLHPSDDHDADPRLAPLLAWRQQLVDSGAVAPRSFKEAHLRLVLRSGRTDVEQIRAMLPGSVAEHAEEMARILAELTPAAPEPDPPPVPEPQPEPEPGPGKHRSPETDEPPVATTTEIPIPTTGFAPFQFSSQQVALHDITVQRTDAAVELSWPPYEAPDDEAARDISVVMYRVVSSDDQAPYSPDPAHLVALTEEPKATDERQQVSPVRHYQVWVNVGASEAAARKAQPVLYATAVLVRPVTGFEIREDAGWVIGQWTAPPGVTAVHVFRVPIDEVDRDEAQYRILTAGENLAGFVDTEPVRGQRYRYRARCAVNVDGVVRLSEAAEADVELAAALMPVTDLVVETAADGASCDLSWTPPAGGQVAIYRSQNGPSAGAEAIELPQGALEQVGLTPELRVTQDLTEETGSDGRRRARLTGVTWPSEWSRAYFTPVTLMGERAMLGRTLSSVRTGTIRDIELAEYCNKQVLTFDWPDGAASVIVYLAPKGHDPRSGLNGRSFEISLEEYERYGGMHLTGQLPVGGCSLHLAPVAFAGGRRVVGAFSSIEYRGLLRLQYAVRIGRDPNGFPTTATIALRAEQNVPGSPGFVLVNNPQRLPLSVHDGHPVDVAPLDARGQLADHPSKELRWSALTTSGDGELWAANLSGLQGWIRLFVNIGSPAQLRVIALLDPPVETLRLTAATL.

A compositionally biased stretch (basic and acidic residues) spans 1–21 (MGERGELVSDLHPSDDHDADP). 2 disordered regions span residues 1–23 (MGERGELVSDLHPSDDHDADPRL) and 87–134 (PAAP…TTGF). The span at 89–107 (APEPDPPPVPEPQPEPEPG) shows a compositional bias: pro residues.

Functionally, may be involved in assembly of the ESX-1 / type VII specialized secretion system (T7SS), which exports several proteins including EsxA and EsxB. Involved in DNA conjugation in recipient (MKD8) but not donor (mc(2)155) strain. The sequence is that of Putative ESX-1 scaffolding and assembly protein SaeA (saeA) from Mycolicibacterium smegmatis (strain MKD8) (Mycobacterium smegmatis).